The chain runs to 267 residues: Orotidine 5'-phosphate decarboxylase (267 aa).

Substrate-binding positions include aspartate 40, 62–64 (KTH), 93–102 (DRKFADIGNT), tyrosine 215, and arginine 234. Residue lysine 95 is the Proton donor of the active site.

Belongs to the OMP decarboxylase family.

The catalysed reaction is orotidine 5'-phosphate + H(+) = UMP + CO2. Its pathway is pyrimidine metabolism; UMP biosynthesis via de novo pathway; UMP from orotate: step 2/2. The protein is Orotidine 5'-phosphate decarboxylase (pyrG) of Phycomyces blakesleeanus (strain ATCC 8743b / DSM 1359 / FGSC 10004 / NBRC 33097 / NRRL 1555).